The following is a 373-amino-acid chain: Caspase-4 (373 aa).

Positions 1-59 are required for LPS-binding; that stretch reads MAENKHPDKPLKVLEQLGKEVLTEYLEKLVQSNVLKLKEEDKQKFNNAERSDKRWVFVD. Positions 1-80 are excised as a propeptide; it reads MAENKHPDKP…MLLQTFFSVD (80 aa). The CARD domain occupies 1-91; it reads MAENKHPDKP…GSHHGEANLE (91 aa). Residue Ser83 is modified to Phosphoserine. Residues His206 and Cys254 contribute to the active site. Positions 267-285 are excised as a propeptide; it reads SSKPQLCRGVDLPRNMEAD. Arg310 carries the (Microbial infection) ADP-riboxanated arginine modification.

This sequence belongs to the peptidase C14A family. As to quaternary structure, heterotetramer that consists of two anti-parallel arranged heterodimers, each one formed by a 20 kDa (Caspase-4 subunit p20) and a 10 kDa (Caspase-4 subunit p10) subunit. Upon direct LPS-binding, forms large homooligomers, resulting in its activation. These oligomers are often referred to as 'non-canonical inflammasomes'. In its precursor form, interacts with TMEM214; this interaction is required for association with the endoplasmic reticulum membrane. Interacts with CASP1. Interacts with NOD2. Interacts with Serpinb1a, Serpinb1b and Serpinb1c; these interactions regulate CASP4 activity. In terms of assembly, heterotetramer that consists of two anti-parallel arranged heterodimers, each one formed by a 20 kDa (Caspase-4 subunit p20) and a 10 kDa (Caspase-4 subunit p10) subunit. In terms of processing, in response to activation signals, undergoes autoproteolytic cleavage and activation. Post-translationally, (Microbial infection) ADP-riboxanation by S.flexneri OspC3 blocks CASP4 autoprocessing, preventing CASP4 activation and ability to recognize and cleave GSDMD, thereby thwarting the inflammasome/pyroptosis-mediated defense. As to expression, widely expressed, including in thymus, lung and spleen (at protein level). Very low levels, if any, in the brain.

The protein resides in the cytoplasm. It is found in the cytosol. The protein localises to the endoplasmic reticulum membrane. It localises to the mitochondrion. Its subcellular location is the inflammasome. The protein resides in the secreted. The enzyme catalyses Strict requirement for Asp at the P1 position and has a preferred cleavage sequence of (Ile/Leu/Val/Phe)-Gly-His-Asp-|-.. With respect to regulation, activated by homooligomerization induced by direct binding to cytosolic LPS, in a TLR4-independent manner. In addition to LPS, CASP4/CASP11 may also be activated by oxidized phospholipid 1-palmitoyl-2-arachidonoyl- sn-glycero-3-phosphorylcholine, an oxidized phospholipid (oxPAPC), in dendritic cells, promoting adaptive immunity. The role of oxPAPC is however unclear and another report suggests that oxPAPC competes with LPS-binding and inhibits the non-canonical inflammasome in macrophages. Functionally, inflammatory caspase that acts as the effector of the non-canonical inflammasome by mediating lipopolysaccharide (LPS)-induced pyroptosis. Also indirectly activates the NLRP3 and NLRP6 inflammasomes. Acts as a thiol protease that cleaves a tetrapeptide after an Asp residue at position P1: catalyzes cleavage of CGAS and GSDMD. In contrast to its human ortholog, does not cleave IL18. Effector of the non-canonical inflammasome independently of NLRP3 inflammasome and CASP1: the non-canonical inflammasome promotes pyroptosis through GSDMD cleavage without involving secretion of cytokine IL1B and IL18. In the non-canonical inflammasome, CASP4/CASP11 is activated by direct binding to the lipid A moiety of LPS without the need of an upstream sensor. LPS-binding promotes CASP4/CASP11 activation and CASP4/CASP11-mediated cleavage of GSDMD, followed by pyroptosis of infected cells and their extrusion into the gut lumen. Also indirectly promotes secretion of mature cytokines (IL1A, IL18 and HMGB1) downstream of GSDMD-mediated pyroptosis via activation of the NLRP3 and NLRP6 inflammasomes. Involved in NLRP3-dependent CASP1 activation and IL1B and IL18 secretion in response to non-canonical activators, such as UVB radiation or cholera enterotoxin. Involved in NLRP6 inflammasome-dependent activation in response to lipoteichoic acid (LTA), a cell-wall component of Gram-positive bacteria, which leads to CASP1 activation and IL1B and IL18 secretion. Involved in LPS-induced IL6 secretion; this activity may not require caspase enzymatic activity. The non-canonical inflammasome is required for innate immunity to cytosolic, but not vacuolar, bacteria. Plays a crucial role in the restriction of S.typhimurium replication in colonic epithelial cells during infection. Activation of the non-canonical inflammasome in brain endothelial cells can lead to excessive pyroptosis, leading to blood-brain barrier breakdown. Pyroptosis limits bacterial replication, while cytokine secretion promotes the recruitment and activation of immune cells and triggers mucosal inflammation. May also act as an activator of adaptive immunity in dendritic cells, following activation by oxidized phospholipid 1-palmitoyl-2-arachidonoyl- sn-glycero-3-phosphorylcholine, an oxidized phospholipid (oxPAPC). Cleavage of GSDMD is not strictly dependent on the consensus cleavage site but depends on an exosite interface on CASP4/CASP11 that recognizes and binds the Gasdermin-D, C-terminal (GSDMD-CT) part. In contrast, it does not directly process IL1B. During non-canonical inflammasome activation, cuts CGAS and may play a role in the regulation of antiviral innate immune activation. The polypeptide is Caspase-4 (Mus musculus (Mouse)).